Here is a 435-residue protein sequence, read N- to C-terminus: 5-hydroxybenzimidazole synthase (435 aa).

Substrate contacts are provided by residues M95, Y124, H163, 186–188 (SKG), 227–230 (NGLR), and E266. A Zn(2+)-binding site is contributed by H270. Y293 is a substrate binding site. Residue H334 participates in Zn(2+) binding. Residues C410, C413, and C417 each coordinate [4Fe-4S] cluster.

This sequence belongs to the ThiC family. 5-hydroxybenzimidazole synthase subfamily. Homodimer. The cofactor is [4Fe-4S] cluster.

It catalyses the reaction 5-amino-1-(5-phospho-beta-D-ribosyl)imidazole + AH2 + S-adenosyl-L-methionine = 5-hydroxybenzimidazole + 5'-deoxyadenosine + formate + L-methionine + A + NH4(+) + phosphate + 2 H(+). The protein operates within cofactor biosynthesis; adenosylcobalamin biosynthesis. Catalyzes the complex conversion of aminoimidazole ribotide (AIR) to 5-hydroxybenzimidazole (5-HBI) in a radical S-adenosyl-L-methionine (SAM)-dependent reaction. Is thus involved in the anaerobic biosynthesis of dimethylbenzimidazole (DMB), the lower axial ligand of vitamin B12 (cobalamin). This chain is 5-hydroxybenzimidazole synthase, found in Desulfuromonas acetoxidans (strain DSM 684 / 11070).